We begin with the raw amino-acid sequence, 210 residues long: Somatotropin (210 aa).

The signal sequence occupies residues 1–22 (MGQVFLLMPVLLVSCFLSQGAA). His38 contacts Zn(2+). Cys71 and Cys183 are joined by a disulfide. Position 192 (Glu192) interacts with Zn(2+). Cys200 and Cys208 are oxidised to a cystine.

It belongs to the somatotropin/prolactin family.

It is found in the secreted. Functionally, growth hormone plays an important role in growth control and is involved in the regulation of several anabolic processes. Implicated as an osmoregulatory substance important for seawater adaptation. The polypeptide is Somatotropin (gh) (Oncorhynchus keta (Chum salmon)).